The chain runs to 244 residues: MSSFFLTGTDTNVGKTVASRAIIQALQNQGIQIVGYKPVAFSREECVYTDMENQQAAESDYDSQNNSDVLTLMKSTHEKVSYQEINSYTFRHSLPVFSVQGKHIRIEKMDADLARLNQKYQSVLVEGSYGWLTPINKTYCFADWAKSHQMPVVLVVGIKEGCLNHALLTVESIQQKGLPLLGWIANRINPCLGHYAEIIDLLSEKIDAPLLGQIPYLHKPEEQDLARYIHNLDRLTYMETVLAD.

Position 12–17 (12–17 (NVGKTV)) interacts with ATP. Mg(2+) is bound at residue Thr-16. Residue Lys-37 is part of the active site. Asp-68 contacts ATP. Mg(2+) contacts are provided by Asp-68 and Glu-126. Residues 186-187 (NR), 215-217 (PYL), and Glu-222 each bind ATP.

The protein belongs to the dethiobiotin synthetase family. As to quaternary structure, homodimer. The cofactor is Mg(2+).

It is found in the cytoplasm. It carries out the reaction (7R,8S)-7,8-diammoniononanoate + CO2 + ATP = (4R,5S)-dethiobiotin + ADP + phosphate + 3 H(+). Its pathway is cofactor biosynthesis; biotin biosynthesis; biotin from 7,8-diaminononanoate: step 1/2. In terms of biological role, catalyzes a mechanistically unusual reaction, the ATP-dependent insertion of CO2 between the N7 and N8 nitrogen atoms of 7,8-diaminopelargonic acid (DAPA, also called 7,8-diammoniononanoate) to form a ureido ring. The protein is ATP-dependent dethiobiotin synthetase BioD 1 of Pasteurella multocida (strain Pm70).